We begin with the raw amino-acid sequence, 267 residues long: GTP cyclohydrolase MptA (267 aa).

The protein belongs to the GTP cyclohydrolase IV family. In terms of assembly, homodimer. Fe(2+) is required as a cofactor.

It catalyses the reaction GTP + H2O = 7,8-dihydroneopterin 2',3'-cyclic phosphate + formate + diphosphate + H(+). The protein operates within cofactor biosynthesis; 5,6,7,8-tetrahydromethanopterin biosynthesis. Functionally, converts GTP to 7,8-dihydro-D-neopterin 2',3'-cyclic phosphate, the first intermediate in the biosynthesis of coenzyme methanopterin. The chain is GTP cyclohydrolase MptA from Thermococcus kodakarensis (strain ATCC BAA-918 / JCM 12380 / KOD1) (Pyrococcus kodakaraensis (strain KOD1)).